The primary structure comprises 453 residues: MSTRDHVKQSPMPVQEGYPRSSKEFSPPSSRSRKRTWVRNLTMSLLIAAGAATFSKYIFPLGSILGAGSLQPIDPHDYAARADRILSTTPLIDGHNDLPYLIRLETKNKIYDHEKLPFEAGLLSHTDAKKIRQGKLGGQFWSVYVECPADPSAGIDDPSWAVRDTLEQIDVAKRLVDEYPDLLEYCETASCARSAFKKGRVGSFLGIEVHDLGVRYITVTHNCDNAFATAASTVAAGKPDHGLTDFGREFVKEMNRLGMLIDLSHVSHQTMRDVLSVTNAPVIFSHSSSYALSKHLRNVPDDVLRTVTKNGGVVMVTFVPLFLKVNDPASVTIHDAVDHILHVAKVAGWDHVGIGSDFDGTAVVPKGLENVSKYPRLVELLLERGVTDEQARKLVGENLLRVWSKAEDIAYAIQASGQKPNEETWSGRKWTAAADIPMPSMFNDSAERRKQLE.

Positions 1 to 33 (MSTRDHVKQSPMPVQEGYPRSSKEFSPPSSRSR) are disordered. The chain crosses the membrane as a helical span at residues 41-63 (LTMSLLIAAGAATFSKYIFPLGS). The Zn(2+) site is built by histidine 95, aspartate 97, and glutamate 208. A disulfide bond links cysteine 147 and cysteine 223. Histidine 221 is a binding site for substrate. Zn(2+) is bound by residues histidine 265 and histidine 286. Arginine 297 and aspartate 357 together coordinate substrate. N-linked (GlcNAc...) asparagine glycosylation is found at asparagine 370 and asparagine 443.

This sequence belongs to the metallo-dependent hydrolases superfamily. Peptidase M19 family. It depends on Zn(2+) as a cofactor.

Its subcellular location is the membrane. It carries out the reaction an L-aminoacyl-L-amino acid + H2O = 2 an L-alpha-amino acid. In terms of biological role, hydrolyzes a wide range of dipeptides. This Uncinocarpus reesii (strain UAMH 1704) protein is Putative dipeptidase UREG_03382.